Reading from the N-terminus, the 433-residue chain is Actin-related protein 4 (433 aa).

Residues 289-317 (GSDEEMNEEPSKPIEQTENNEVSQQDSSV) are disordered. Over residues 302–317 (IEQTENNEVSQQDSSV) the composition is skewed to polar residues.

The protein belongs to the actin family. ARP4 subfamily. As to quaternary structure, component of the NuA4 histone acetyltransferase complex, of the INO80 chromatin remodeling complex, and of the SWR1 chromatin remodeling complex.

It localises to the nucleus. In terms of biological role, chromatin interaction component of the NuA4 histone acetyltransferase complex which is involved in transcriptional activation of selected genes principally by acetylation of nucleosomal histone H4 and H2A. The NuA4 complex is also involved in DNA repair. Is required for NuA4 complex integrity. Component of the SWR1 complex which mediates the ATP-dependent exchange of histone H2A for the H2A variant HZT1 leading to transcriptional regulation of selected genes by chromatin remodeling. Component of the INO80 complex which remodels chromatin by shifting nucleosomes and is involved in DNA repair. This is Actin-related protein 4 (alp5) from Schizosaccharomyces pombe (strain 972 / ATCC 24843) (Fission yeast).